Here is a 161-residue protein sequence, read N- to C-terminus: Phage-like element PBSX protein XkdI (161 aa).

To B.subtilis YqbI.

The protein is Phage-like element PBSX protein XkdI (xkdI) of Bacillus subtilis (strain 168).